A 723-amino-acid chain; its full sequence is tRNA (guanine(27)-N(2))-dimethyltransferase (723 aa).

Acidic residues predominate over residues 1 to 10 (MENMAEEELL). The tract at residues 1 to 72 (MENMAEEELL…SLASVPEEAE (72 aa)) is disordered. A Phosphothreonine modification is found at threonine 23. The segment covering 32 to 44 (PAADTALDSAPTP) has biased composition (low complexity). The segment covering 45–59 (DSAPAPALAPAPAPA) has biased composition (pro residues). Serine 61 carries the phosphoserine modification. The Nucleolar localization signal signature appears at 128–132 (HKLRR). Residues 177–199 (YHCIICSATITRRTDMLGHVKRH) form a C2H2-type zinc finger. A Trm1 methyltransferase domain is found at 220-679 (EVLKETDTDI…ASLTQFKSIL (460 aa)). Positions 253, 300, 348, and 349 each coordinate S-adenosyl-L-methionine. Residues cysteine 479, cysteine 482, cysteine 504, and cysteine 506 each contribute to the Zn(2+) site. A Glycyl lysine isopeptide (Lys-Gly) (interchain with G-Cter in SUMO2) cross-link involves residue lysine 576. At serine 603 the chain carries Phosphoserine.

The protein belongs to the class I-like SAM-binding methyltransferase superfamily. Trm1 family.

The protein localises to the nucleus. The protein resides in the nucleolus. The enzyme catalyses guanosine(27) in tRNA(Tyr) + 2 S-adenosyl-L-methionine = N(2)-dimethylguanosine(27) in tRNA(Tyr) + 2 S-adenosyl-L-homocysteine + 2 H(+). In terms of biological role, specifically dimethylates a single guanine residue at position 27 of tRNA(Tyr) using S-adenosyl-L-methionine as donor of the methyl groups. Dimethylation at position 27 of tRNA(Tyr) is required for efficient translation of tyrosine codons. Also required to maintain 3-(3-amino-3-carboxypropyl)uridine (acp3U) in the D-loop of several cytoplasmic tRNAs. This Rattus norvegicus (Rat) protein is tRNA (guanine(27)-N(2))-dimethyltransferase.